The chain runs to 472 residues: Proline--tRNA ligase (472 aa).

It belongs to the class-II aminoacyl-tRNA synthetase family. ProS type 3 subfamily. In terms of assembly, homodimer.

The protein localises to the cytoplasm. The catalysed reaction is tRNA(Pro) + L-proline + ATP = L-prolyl-tRNA(Pro) + AMP + diphosphate. Its function is as follows. Catalyzes the attachment of proline to tRNA(Pro) in a two-step reaction: proline is first activated by ATP to form Pro-AMP and then transferred to the acceptor end of tRNA(Pro). The protein is Proline--tRNA ligase of Ureaplasma parvum serovar 3 (strain ATCC 27815 / 27 / NCTC 11736).